We begin with the raw amino-acid sequence, 447 residues long: Tubulin beta-5 chain (447 aa).

GTP contacts are provided by glutamine 11, glutamate 69, serine 138, glycine 142, threonine 143, glycine 144, asparagine 204, and asparagine 226. A Mg(2+)-binding site is contributed by glutamate 69.

Belongs to the tubulin family. In terms of assembly, dimer of alpha and beta chains. A typical microtubule is a hollow water-filled tube with an outer diameter of 25 nm and an inner diameter of 15 nM. Alpha-beta heterodimers associate head-to-tail to form protofilaments running lengthwise along the microtubule wall with the beta-tubulin subunit facing the microtubule plus end conferring a structural polarity. Microtubules usually have 13 protofilaments but different protofilament numbers can be found in some organisms and specialized cells. The cofactor is Mg(2+).

The protein resides in the cytoplasm. It localises to the cytoskeleton. Its function is as follows. Tubulin is the major constituent of microtubules, a cylinder consisting of laterally associated linear protofilaments composed of alpha- and beta-tubulin heterodimers. Microtubules grow by the addition of GTP-tubulin dimers to the microtubule end, where a stabilizing cap forms. Below the cap, tubulin dimers are in GDP-bound state, owing to GTPase activity of alpha-tubulin. The polypeptide is Tubulin beta-5 chain (TUBB5) (Triticum aestivum (Wheat)).